The sequence spans 244 residues: Ethylene-responsive transcription factor 1 (244 aa).

The segment at residues 106–164 (HYRGVRQRPWGKFAAEIRDPAKNGARVWLGTYESAEEAALAYGKAAFRMRGTKALLNFP) is a DNA-binding region (AP2/ERF). The span at 186–198 (SASSSVSSASESG) shows a compositional bias: low complexity. Positions 186 to 214 (SASSSVSSASESGSPKRRRKGVAAKQAEL) are disordered.

The protein belongs to the ethylene-response factor family. Class 1 subfamily. Present in stems.

The protein localises to the nucleus. Its function is as follows. Involved in the regulation of gene expression during fruit ripening, by stress factors and by components of stress signal transduction pathways. Transcription factor that binds to the GCC-box pathogenesis-related promoter element. Probably acts as a transcriptional activator and may be involved in disease resistance pathways. The polypeptide is Ethylene-responsive transcription factor 1 (ERF1) (Solanum lycopersicum (Tomato)).